The sequence spans 253 residues: Phosphate import ATP-binding protein PstB 3 (253 aa).

The ABC transporter domain occupies 8–248; it reads LVINNLDLYY…PQDERTENYI (241 aa). 40–47 serves as a coordination point for ATP; the sequence is GPSGCGKS.

Belongs to the ABC transporter superfamily. Phosphate importer (TC 3.A.1.7) family. In terms of assembly, the complex is composed of two ATP-binding proteins (PstB), two transmembrane proteins (PstC and PstA) and a solute-binding protein (PstS).

The protein resides in the cell membrane. It carries out the reaction phosphate(out) + ATP + H2O = ADP + 2 phosphate(in) + H(+). Part of the ABC transporter complex PstSACB involved in phosphate import. Responsible for energy coupling to the transport system. This Streptococcus agalactiae serotype III (strain NEM316) protein is Phosphate import ATP-binding protein PstB 3.